A 507-amino-acid polypeptide reads, in one-letter code: Cobyric acid synthase (507 aa).

The GATase cobBQ-type domain maps to 251 to 448; sequence DIDIAVVHLP…LHGLFDSDAF (198 aa). Cysteine 332 serves as the catalytic Nucleophile. Histidine 440 is a catalytic residue.

Belongs to the CobB/CobQ family. CobQ subfamily.

Its pathway is cofactor biosynthesis; adenosylcobalamin biosynthesis. Its function is as follows. Catalyzes amidations at positions B, D, E, and G on adenosylcobyrinic A,C-diamide. NH(2) groups are provided by glutamine, and one molecule of ATP is hydrogenolyzed for each amidation. The chain is Cobyric acid synthase from Klebsiella pneumoniae subsp. pneumoniae (strain ATCC 700721 / MGH 78578).